Here is a 432-residue protein sequence, read N- to C-terminus: Cyclic GMP-AMP synthase-like receptor (432 aa).

ATP contacts are provided by residues serine 59 and 71-73; that span reads EFD. Glutamate 71, aspartate 73, and aspartate 205 together coordinate Mg(2+). GTP contacts are provided by residues aspartate 205 and 255–262; that span reads KQTCSVLE. ATP is bound by residues 259–262, lysine 284, and 303–307; these read SVLE and TYALK.

The protein belongs to the mab-21 family. Mg(2+) serves as cofactor. It depends on Mn(2+) as a cofactor.

It carries out the reaction GTP + ATP = 2',3'-cGAMP + 2 diphosphate. It catalyses the reaction GTP + ATP = pppGp(2'-5')A + diphosphate. The catalysed reaction is pppGp(2'-5')A = 2',3'-cGAMP + diphosphate. Functionally, nucleotidyltransferase that catalyzes the formation of cyclic GMP-AMP (2',3'-cGAMP) from ATP and GTP and plays a key role in innate immunity. Directly binds some unknown ligand, activating the nucleotidyltransferase activity, leading to synthesis of 2',3'-cGAMP, a second messenger that binds to and activates Sting, thereby triggering the immune response via activation of the NF-kappa-B transcription factor. This chain is Cyclic GMP-AMP synthase-like receptor, found in Pocillopora damicornis (Cauliflower coral).